The primary structure comprises 334 residues: HTH-type transcriptional repressor PurR (334 aa).

The 55-residue stretch at 2–56 folds into the HTH lacI-type domain; the sequence is ATIKDVAKMAGVSTTTVSHVINKTRHVADETKQTVLDAIKALNYSPSAVARSLKV. The H-T-H motif DNA-binding region spans 4–23; the sequence is IKDVAKMAGVSTTTVSHVIN. Residues 48 to 56 mediate DNA binding; that stretch reads SAVARSLKV. 5 residues coordinate hypoxanthine: Tyr73, Lys189, Thr191, Phe220, and Asp274.

In terms of assembly, homodimer.

It participates in purine metabolism; purine nucleotide biosynthesis [regulation]. In terms of biological role, is the main repressor of the genes involved in the de novo synthesis of purine nucleotides, regulating purB, purC, purEK, purF, purHD, purL, purMN and guaBA expression. PurR is allosterically activated to bind its cognate DNA by binding the purine corepressors, hypoxanthine or guanine, thereby effecting transcription repression. This Mannheimia succiniciproducens (strain KCTC 0769BP / MBEL55E) protein is HTH-type transcriptional repressor PurR.